A 958-amino-acid chain; its full sequence is Exosome complex exonuclease RRP44 (958 aa).

Residue Met-1 is modified to N-acetylmethionine. At Lys-18 the chain carries N6-acetyllysine. The 119-residue stretch at 64-182 (HYLLPDTNVL…FITNDRRNKE (119 aa)) folds into the PINc domain. A Phosphoserine modification is found at Ser-215. A CSD1 domain is found at 227–319 (IFSEHLPLSK…LHDEGQNEED (93 aa)). Residues 372–438 (LFTPADKRIP…ETEVLLLEHD (67 aa)) form the CSD2 domain. Residues 467-792 (REDLRHLCIC…ADVIVHRLLA (326 aa)) enclose the RNB domain. The tract at residues 938 to 958 (PTDTSNMDLNGPKKKKMKLGK) is disordered. Over residues 949–958 (PKKKKMKLGK) the composition is skewed to basic residues.

The protein belongs to the RNR ribonuclease family. In terms of assembly, component of the RNA exosome complex; within the complex interacts with EXOSC4, EXOSC7 and EXOSC9 of the exosome core complex (Exo-9). The catalytically inactive RNA exosome core complex (Exo-9) associates with the catalytic subunit EXOSC10/RRP6. Exo-9 may associate with DIS3 to form the nucleolar exosome complex, or DIS3L to form the cytoplasmic exosome complex. Exo-9 is formed by a hexameric base ring consisting of the heterodimers EXOSC4-EXOSC9, EXOSC5-EXOSC8 and EXOSC6-EXOSC7, and a cap ring consisting of EXOSC1, EXOSC2 and EXOSC3; DIS3 associates with the base ring of Exo-9. The RNA exosome complex associates with cofactors C1D/RRP47, MPHOSPH6/MPP6 and MTREX/MTR4. Interacts with DHX34; the interaction is RNA-independent. The cofactor is Mg(2+). Requires Mn(2+) as cofactor. In terms of tissue distribution, widely expressed.

Its subcellular location is the cytoplasm. The protein localises to the nucleus. The protein resides in the nucleolus. It is found in the nucleoplasm. Putative catalytic component of the RNA exosome complex which has 3'-&gt;5' exoribonuclease activity and participates in a multitude of cellular RNA processing and degradation events. In the nucleus, the RNA exosome complex is involved in proper maturation of stable RNA species such as rRNA, snRNA and snoRNA, in the elimination of RNA processing by-products and non-coding 'pervasive' transcripts, such as antisense RNA species and promoter-upstream transcripts (PROMPTs), and of mRNAs with processing defects, thereby limiting or excluding their export to the cytoplasm. The RNA exosome may be involved in Ig class switch recombination (CSR) and/or Ig variable region somatic hypermutation (SHM) by targeting AICDA deamination activity to transcribed dsDNA substrates. In the cytoplasm, the RNA exosome complex is involved in general mRNA turnover and specifically degrades inherently unstable mRNAs containing AU-rich elements (AREs) within their 3' untranslated regions, and in RNA surveillance pathways, preventing translation of aberrant mRNAs. It seems to be involved in degradation of histone mRNA. DIS3 has both 3'-5' exonuclease and endonuclease activities. This is Exosome complex exonuclease RRP44 (DIS3) from Homo sapiens (Human).